We begin with the raw amino-acid sequence, 238 residues long: Orotidine 5'-phosphate decarboxylase (238 aa).

Substrate contacts are provided by residues Asp10, Lys32, 59 to 68, Thr122, Arg184, Gln193, Gly213, and Arg214; that span reads DLKLHDIPNT. The active-site Proton donor is Lys61.

Belongs to the OMP decarboxylase family. Type 1 subfamily. As to quaternary structure, homodimer.

The enzyme catalyses orotidine 5'-phosphate + H(+) = UMP + CO2. Its pathway is pyrimidine metabolism; UMP biosynthesis via de novo pathway; UMP from orotate: step 2/2. Catalyzes the decarboxylation of orotidine 5'-monophosphate (OMP) to uridine 5'-monophosphate (UMP). This chain is Orotidine 5'-phosphate decarboxylase, found in Bacillus cereus (strain B4264).